A 423-amino-acid polypeptide reads, in one-letter code: Phospholipase A1-IIalpha (423 aa).

The stretch at 194–217 forms a coiled coil; it reads SAQEQVQGELKRLLELYKDEEISI. The active-site Acyl-ester intermediate is the Ser223. Active-site charge relay system residues include Ser223, Asp290, and His327. The segment at 399–423 is disordered; it reads HDDDVDADDNDDSSTSNQLQELNTD. Residues 401-410 are compositionally biased toward acidic residues; that stretch reads DDVDADDNDD. A compositionally biased stretch (polar residues) spans 411–423; sequence SSTSNQLQELNTD.

It belongs to the AB hydrolase superfamily. Lipase family.

It is found in the cytoplasm. Acylhydrolase that catalyzes the hydrolysis of phospholipids at the sn-1 position. In Arabidopsis thaliana (Mouse-ear cress), this protein is Phospholipase A1-IIalpha.